Here is a 126-residue protein sequence, read N- to C-terminus: Small ribosomal subunit protein uS13 (126 aa).

A disordered region spans residues 98–126; sequence PVRGQSTKNNARTRKGRKKTVANKKKATK. Residues 108–126 show a composition bias toward basic residues; that stretch reads ARTRKGRKKTVANKKKATK.

Belongs to the universal ribosomal protein uS13 family. As to quaternary structure, part of the 30S ribosomal subunit. Forms a loose heterodimer with protein S19. Forms two bridges to the 50S subunit in the 70S ribosome.

In terms of biological role, located at the top of the head of the 30S subunit, it contacts several helices of the 16S rRNA. In the 70S ribosome it contacts the 23S rRNA (bridge B1a) and protein L5 of the 50S subunit (bridge B1b), connecting the 2 subunits; these bridges are implicated in subunit movement. Contacts the tRNAs in the A and P-sites. This is Small ribosomal subunit protein uS13 from Bacteroides fragilis (strain ATCC 25285 / DSM 2151 / CCUG 4856 / JCM 11019 / LMG 10263 / NCTC 9343 / Onslow / VPI 2553 / EN-2).